The primary structure comprises 605 residues: MVQAPSVYVCGFVERPDAPPKDACLHLDPLTVKSQLPLKKPLPLTVEHLPDAPVGSVFGLYQSRAGLFSAASITSGDFLSLLDSIYHDCDIAQSQRLPLPREPKVEALHAWLPSLSLASLHPDIPQTTADGGKLSFFDHVSICALGRRRGTTAVYGTDLAWVLKHFSDLEPSIAAQIENDANAAKRESGCPEDHPLPLTKLIAKAIDAGFLRNRVETLRQDRGVANIPAESYLKASDAPDLQKPDKALQSPPPASTDPATMLSGNAGEGATACGGSAAAGQDLISVPRNTFMTLLQTNLDNKPPRQTPLPYAAPLPPFSHQAIATAPSYGPGAGAVSPAGGYFTSPGGYYAGPAGGDPGAFLAMDAHTYHPHPHPPPAYFGLPGLFGPPPPVPPYYGSHLRADYVPAPSRSNKRKRDPEEDEEGGGLFPGEDATLYRKDIAGLSKSVNELQHTLQALRRETLSYGHTGVGYCPQQGPCYTHSGPYGFQPHQSYEVPRYVPHPPPPPTSHQAAQAQPPPPGTQAPEAHCVAESTIPEAGAAGNSGPREDTNPQQPTTEGHHRGKKLVQASASGVAQSKEPTTPKAKSVSAHLKSIFCEELLNKRVA.

Active-site charge relay system residues include histidine 48, serine 116, and histidine 139. The disordered stretch occupies residues alanine 235 to glycine 274. The segment at glutamine 281–aspartate 300 is interaction with pAP. Disordered stretches follow at residues aspartate 403 to glutamate 431 and proline 489 to serine 588. Positions arginine 410 to arginine 416 match the Nuclear localization signal motif. Over residues alanine 568–proline 579 the composition is skewed to polar residues. Residues lysine 585 to alanine 605 are interaction with major capsid protein.

The protein belongs to the herpesviridae capsid scaffolding protein family. Homomultimer. Interacts with major capsid protein. As to quaternary structure, exists in a monomer-dimer equilibrium with the dimer being the active species. Post-translationally, capsid scaffolding protein is cleaved by assemblin after formation of the spherical procapsid. As a result, the capsid obtains its mature, icosahedral shape. Cleavages occur at two or more sites: release (R-site) and maturation (M-site).

The protein resides in the host cytoplasm. It is found in the host nucleus. The catalysed reaction is Cleaves -Ala-|-Ser- and -Ala-|-Ala- bonds in the scaffold protein.. Acts as a scaffold protein by binding major capsid protein in the cytoplasm, inducing the nuclear localization of both proteins. Multimerizes in the nucleus such as major capsid protein forms the icosahedral T=16 capsid. Autocatalytic cleavage releases the assembly protein, and subsequently abolishes interaction with major capsid protein. Cleavages products are evicted from the capsid before or during DNA packaging. Its function is as follows. Protease that plays an essential role in virion assembly within the nucleus. Catalyzes the cleavage of the assembly protein after formation of the spherical procapsid. By that cleavage, the capsid matures and gains its icosahedral shape. The cleavage sites seem to include -Ala-Ser-, -Ala-Ala-, as well as Ala-Thr bonds. Assemblin and cleavages products are evicted from the capsid before or during DNA packaging. In terms of biological role, plays a major role in capsid assembly. Acts as a scaffold protein by binding major capsid protein. Multimerizes in the nucleus such as major capsid protein forms the icosahedral T=16 capsid. Cleaved by assemblin after capsid completion. The cleavages products are evicted from the capsid before or during DNA packaging. This is Capsid scaffolding protein from Homo sapiens (Human).